Consider the following 168-residue polypeptide: Ribosome maturation factor RimM (168 aa).

In terms of domain architecture, PRC barrel spans 95 to 166; it reads EHEFYYSDII…RIQITPMEGL (72 aa).

This sequence belongs to the RimM family. Binds ribosomal protein uS19.

It localises to the cytoplasm. An accessory protein needed during the final step in the assembly of 30S ribosomal subunit, possibly for assembly of the head region. Essential for efficient processing of 16S rRNA. May be needed both before and after RbfA during the maturation of 16S rRNA. It has affinity for free ribosomal 30S subunits but not for 70S ribosomes. In Staphylococcus saprophyticus subsp. saprophyticus (strain ATCC 15305 / DSM 20229 / NCIMB 8711 / NCTC 7292 / S-41), this protein is Ribosome maturation factor RimM.